Consider the following 359-residue polypeptide: Lactosylceramide 4-alpha-galactosyltransferase (359 aa).

Over 1 to 30 (MGISCSHLEETMSKPPDCLLRMLRGTPRQR) the chain is Cytoplasmic. The chain crosses the membrane as a helical; Signal-anchor for type II membrane protein span at residues 31–51 (VFTFFIISFKFMFLISILIYW). The Lumenal segment spans residues 52–359 (HTVGAPKDQR…TTHRAMKMYL (308 aa)). Residues 198-200 (DTD) carry the DXD motif motif. N-linked (GlcNAc...) asparagine glycans are attached at residues asparagine 209 and asparagine 315.

Belongs to the glycosyltransferase 32 family.

It localises to the golgi apparatus membrane. The enzyme catalyses a beta-D-Gal-(1-&gt;4)-beta-D-Glc-(1&lt;-&gt;1)-Cer(d18:1(4E)) + UDP-alpha-D-galactose = a globoside Gb3Cer (d18:1(4E)) + UDP + H(+). It carries out the reaction a beta-D-Gal-(1&lt;-&gt;1')-ceramide + UDP-alpha-D-galactose = alpha-D-Gal-(1-&gt;4)-beta-D-Gal-(1&lt;-&gt;1')-Cer + UDP + H(+). Its pathway is glycolipid biosynthesis. Catalyzes the transfer of galactose from UDP-alpha-D-galactose to lactosylceramide/beta-D-galactosyl-(1-&gt;4)-beta-D-glucosyl-(1&lt;-&gt;1)-ceramide(d18:1(4E)) to produce globotriaosylceramide/globoside Gb3Cer (d18:1(4E)). Also able to transfer galactose to galactosylceramide/beta-D-Gal-(1&lt;-&gt;1')-Cer. Globoside Gb3Cer is a glycosphingolipid of the globo serie, one of the major types of neutral root structures of glycosphingolipids, that constitute a significant portion of mammalian cell membranes. This chain is Lactosylceramide 4-alpha-galactosyltransferase, found in Mus musculus (Mouse).